The following is a 72-amino-acid chain: Putative membrane protein insertion efficiency factor (72 aa).

The protein belongs to the UPF0161 family.

The protein resides in the cell inner membrane. Its function is as follows. Could be involved in insertion of integral membrane proteins into the membrane. The sequence is that of Putative membrane protein insertion efficiency factor from Trichodesmium erythraeum (strain IMS101).